A 407-amino-acid polypeptide reads, in one-letter code: Argininosuccinate synthase (407 aa).

ATP contacts are provided by residues 16–24 (AYSGGLDTS) and Ala-44. Residues Tyr-96 and Ser-101 each coordinate L-citrulline. Position 126 (Gly-126) interacts with ATP. Residues Thr-128, Asn-132, and Asp-133 each coordinate L-aspartate. Residue Asn-132 coordinates L-citrulline. L-citrulline contacts are provided by Arg-136, Ser-185, Ser-194, Glu-270, and Tyr-282.

The protein belongs to the argininosuccinate synthase family. Type 1 subfamily. In terms of assembly, homotetramer.

It is found in the cytoplasm. It catalyses the reaction L-citrulline + L-aspartate + ATP = 2-(N(omega)-L-arginino)succinate + AMP + diphosphate + H(+). It functions in the pathway amino-acid biosynthesis; L-arginine biosynthesis; L-arginine from L-ornithine and carbamoyl phosphate: step 2/3. The protein is Argininosuccinate synthase of Shewanella amazonensis (strain ATCC BAA-1098 / SB2B).